The primary structure comprises 1033 residues: MGSQPPPPGSPLSREEGEAPPLVPAEEGRRRSRRVRLRGSCRHRPSLLSRRELASNGPAVPATASSEIMASAAKEFKMDNFSPKAGTSKLQQTVPADASPDSKCPICLDRFDNVSYLDRCLHKFCFRCVQEWSKNKAECPLCKQPFDSIFHSVRAEDDFKEYVLRPSYNGSFTNPEVRRFRYRTTMTRERSASLYSPSSTVSRRTTTPPDSGVLFEGLGISTRPRDVDIPQFMRQMALRGPTTTDERSLRKIQEQDIINFRRTLYRAGVRVRSIEDGGRYRDISAEFFRRNPACLHRLVPWLKRELTVLFGAHGSLVNIVQHIIMSNVTRYDLESQAFVSDLRPFLLNRTEHFIHEFISFARSPFNMAAFDQHANYDCPPSSEEGSRSDSSVITISPDEAETQELDMNASTVRQAPWDDETPGPSYSSSEQVHVGVSSLLNSSDSSDEELVSGGTTSQIQGVQTNDDVNNDSDSSSDNCVIVGFVKPLAERTPELVELSSDSEELGPYEKVETVKTQEQEQSYSSGDSDVSRASSPRSVLGKDEQMSKSHCDSDTRISSKKEEKRSTSLPAPRDSSSTRGDRVCSPYNHRHRKGGRSRSSDSRSQSRSGHDPRNHRKHGKKRLRNKRSRSRESSSRPRARKDKKRSRTRDSSWSRRSQTLSLSSGSTSRSRSRSSDHGKRRSRSRNRDRYYLRNNYGSKYKWEYTYYSRNKDRDGYESSYRRRTLSRAHYSRQSSSPEFRIQSFSERTNARKKNHSERKYYYYERRRSRSVSSNRSRTTSAGPDRVRNEKPGGKRKYKTRHLEGTSEEAQPAREFTSKGKDSHYQKSKLDGSYKNESDSFSDSRSSDRETKHKRRRRRTRSLSVEIVYEGKATDTSKHHKKKKKKHKKKHKKHHGDNTSRSPVVITIDSDSDGESEVKAGIECSNGSLPQPIQDGAFETKDVVTIEDELGVLDKDCDVTALADDLSTSQTVENCDSPAVPVEQTLDVREESTFASDLESQSSNVSIQAEPSRPVPSPRTSLSSVSPGRDCDVS.

The span at 1-10 (MGSQPPPPGS) shows a compositional bias: pro residues. The disordered stretch occupies residues 1-36 (MGSQPPPPGSPLSREEGEAPPLVPAEEGRRRSRRVR). Residues 52–376 (ELASNGPAVP…MAAFDQHANY (325 aa)) form a required for DNA-binding region. Glycyl lysine isopeptide (Lys-Gly) (interchain with G-Cter in SUMO2) cross-links involve residues Lys74, Lys77, Lys84, and Lys89. A Phosphoserine modification is found at Ser99. The segment at 104–143 (CPICLDRFDNVSYLDRCLHKFCFRCVQEWSKNKAECPLCK) adopts an RING-type zinc-finger fold. Residue Lys160 forms a Glycyl lysine isopeptide (Lys-Gly) (interchain with G-Cter in SUMO2) linkage. Residue Ser196 is modified to Phosphoserine. Lys251 participates in a covalent cross-link: Glycyl lysine isopeptide (Lys-Gly) (interchain with G-Cter in SUMO2). 2 disordered regions span residues 414-477 (QAPW…SSSD) and 496-692 (VELS…RYYL). Low complexity predominate over residues 434-444 (VGVSSLLNSSD). The sumoylation and localization to discrete nuclear foci stretch occupies residues 438 to 574 (SLLNSSDSSD…RSTSLPAPRD (137 aa)). The segment at 438–654 (SLLNSSDSSD…RSRTRDSSWS (217 aa)) is interaction with SUMO1. Polar residues predominate over residues 455–464 (TTSQIQGVQT). The segment at 457–731 (SQIQGVQTND…RRTLSRAHYS (275 aa)) is interaction with p53/TP53. The segment at 457-879 (SQIQGVQTND…GKATDTSKHH (423 aa)) is interaction with TOP1. The span at 465–477 (NDDVNNDSDSSSD) shows a compositional bias: low complexity. At Ser500 the chain carries Phosphoserine. Residues 507 to 518 (PYEKVETVKTQE) show a composition bias toward basic and acidic residues. The span at 522–535 (SYSSGDSDVSRASS) shows a compositional bias: low complexity. Residues 540 to 566 (LGKDEQMSKSHCDSDTRISSKKEEKRS) are compositionally biased toward basic and acidic residues. A Glycyl lysine isopeptide (Lys-Gly) (interchain with G-Cter in SUMO) cross-link involves residue Lys561. A Phosphoserine modification is found at Ser585. Composition is skewed to basic residues over residues 613–629 (RNHR…KRSR) and 637–647 (PRARKDKKRSR). A compositionally biased stretch (low complexity) spans 654-669 (SRRSQTLSLSSGSTSR). A Glycyl lysine isopeptide (Lys-Gly) (interchain with G-Cter in SUMO2) cross-link involves residue Lys701. 2 disordered regions span residues 713–934 (RDGY…PIQD) and 970–1033 (TVEN…CDVS). At Ser718 the chain carries Phosphoserine; by PLK1. Residues 721-730 (RRRTLSRAHY) show a composition bias toward basic residues. Polar residues predominate over residues 731 to 747 (SRQSSSPEFRIQSFSER). At Ser734 the chain carries Phosphoserine. Low complexity predominate over residues 770 to 780 (SVSSNRSRTTS). Basic and acidic residues predominate over residues 815-837 (FTSKGKDSHYQKSKLDGSYKNES). Glycyl lysine isopeptide (Lys-Gly) (interchain with G-Cter in SUMO2) cross-links involve residues Lys818 and Lys834. Residues 851–860 (KHKRRRRRTR) are compositionally biased toward basic residues. Positions 851–914 (KHKRRRRRTR…ITIDSDSDGE (64 aa)) are interaction with UBE2I. Ser861 and Ser863 each carry phosphoserine. Positions 877 to 894 (KHHKKKKKKHKKKHKKHH) are enriched in basic residues. Ser909, Ser911, Ser999, Ser1016, and Ser1025 each carry phosphoserine. Residues 992–1008 (TFASDLESQSSNVSIQA) show a composition bias toward polar residues.

In terms of assembly, interacts with TOP1. Interacts with the SUMO1 conjugating enzyme UBE2I. Interacts with SUMO1. Interacts with NKX3-1; polyubiquitinates NKX3-1 and induces its proteasomal degradation. Interacts with SIN3A; sumoylates SIN3A. Interacts with IKBKE; induced by DNA damage. Interacts with p53/TP53. Interacts with PARK7/DJ-1. Post-translationally, phosphorylation at Ser-99 regulates the E3 ubiquitin-protein ligase activity but not the SUMO1-protein ligase activity. Phosphorylation at Ser-718 increases the E3 ubiquitin-protein ligase activity versus the E3 SUMO1-protein ligase activity resulting in increased p53/TP53 ubiquitination and degradation. In terms of processing, sumoylated.

It localises to the nucleus. The protein localises to the PML body. The catalysed reaction is S-ubiquitinyl-[E2 ubiquitin-conjugating enzyme]-L-cysteine + [acceptor protein]-L-lysine = [E2 ubiquitin-conjugating enzyme]-L-cysteine + N(6)-ubiquitinyl-[acceptor protein]-L-lysine.. Functions as an E3 ubiquitin-protein ligase and as a E3 SUMO1-protein ligase. Probable tumor suppressor involved in cell growth, cell proliferation and apoptosis that regulates p53/TP53 stability through ubiquitin-dependent degradation. May regulate chromatin modification through sumoylation of several chromatin modification-associated proteins. May be involved in DNA-damage-induced cell death through IKBKE sumoylation. The protein is E3 ubiquitin-protein ligase Topors (Topors) of Mus musculus (Mouse).